Reading from the N-terminus, the 382-residue chain is Galactokinase (382 aa).

E34–D37 serves as a coordination point for substrate. Residue G124–S130 coordinates ATP. 2 residues coordinate Mg(2+): S130 and E162. D174 acts as the Proton acceptor in catalysis. Y223 provides a ligand contact to substrate.

This sequence belongs to the GHMP kinase family. GalK subfamily.

The protein resides in the cytoplasm. The enzyme catalyses alpha-D-galactose + ATP = alpha-D-galactose 1-phosphate + ADP + H(+). Its pathway is carbohydrate metabolism; galactose metabolism. In terms of biological role, catalyzes the transfer of the gamma-phosphate of ATP to D-galactose to form alpha-D-galactose-1-phosphate (Gal-1-P). The chain is Galactokinase from Erwinia tasmaniensis (strain DSM 17950 / CFBP 7177 / CIP 109463 / NCPPB 4357 / Et1/99).